We begin with the raw amino-acid sequence, 845 residues long: Protein SPA1-RELATED 3 (845 aa).

Polar residues predominate over residues 1–19 (MEGSSNSNSRGFNTSGVSD). 2 disordered regions span residues 1 to 33 (MEGSSNSNSRGFNTSGVSDRNTEFLPVERLTTR) and 139 to 158 (CSDSGSDSLEDGPISQKEIG). The region spanning 1–297 (MEGSSNSNSR…MSDLLQSEFI (297 aa)) is the Protein kinase domain. The stretch at 301 to 329 (RDNLEEREAAIELRDRIEEQESLLEFLLL) forms a coiled coil. WD repeat units lie at residues 532 to 571 (NSSNLVCALAFDREGELFATAGVNKKIKIFECNSIVNDNR), 581 to 621 (AGRS…LVTE), 624 to 664 (EHKK…SIGT), 666 to 706 (KTKA…IPLC), 710 to 748 (GHSKTVSYVKFVDSSTLVSSSTDNTLKLWDLSMSASGIN), 757 to 796 (GHTNLKNFVGLSVSDGYIATGSETNEVFVYHKAFPMPVMS), and 812 to 845 (DASQFISSICWRGQSSTLVAANSNGNIKILEMMT). The DWD box signature appears at 685-699 (AFGSADHKVYYYDLR).

In terms of assembly, interacts with COP1 and CO.

The protein resides in the nucleus. In terms of biological role, repressor of photomorphogenesis in the light. Probably part of the COP1/SPA E3 ubiquitin-protein ligase complex. The chain is Protein SPA1-RELATED 3 (SPA3) from Arabidopsis thaliana (Mouse-ear cress).